We begin with the raw amino-acid sequence, 391 residues long: Decapping nuclease RAI1 (391 aa).

Glutamate 174 is a binding site for a divalent metal cation. Glutamate 223 provides a ligand contact to substrate. Positions 225, 244, and 245 each coordinate a divalent metal cation. The substrate site is built by lysine 246 and glutamine 270.

The protein belongs to the DXO/Dom3Z family. Interacts with RAT1; the interaction is direct, stabilizes RAT1 protein structure and stimulates its exoribonuclease activity. The interaction also stimulates RAI1 pyrophosphohydrolase activity, probably by recruiting it to mRNA substrates. Requires a divalent metal cation as cofactor.

The protein localises to the nucleus. It catalyses the reaction a 5'-end NAD(+)-phospho-ribonucleoside in mRNA + H2O = a 5'-end phospho-ribonucleoside in mRNA + NAD(+) + H(+). The enzyme catalyses a 5'-end (N(7)-methyl 5'-triphosphoguanosine)-ribonucleoside-ribonucleotide in mRNA + H2O = a (N(7)-methyl 5'-triphosphoguanosine)-nucleoside + a 5'-end phospho-ribonucleoside in mRNA + H(+). It carries out the reaction a 5'-end triphospho-ribonucleoside in mRNA + H2O = a 5'-end phospho-ribonucleoside in mRNA + diphosphate + H(+). Functionally, decapping enzyme for NAD-capped RNAs: specifically hydrolyzes the nicotinamide adenine dinucleotide (NAD) cap from a subset of RNAs by removing the entire NAD moiety from the 5'-end of an NAD-capped RNA. The NAD-cap is present at the 5'-end of some RNAs and snoRNAs. In contrast to the canonical 5'-end N7 methylguanosine (m7G) cap, the NAD cap promotes mRNA decay. Also acts as a non-canonical decapping enzyme that removes the entire cap structure of m7G capped or incompletely capped RNAs. Has decapping activity toward incomplete 5'-end m7G cap mRNAs such as unmethylated 5'-end-capped RNA (cap0), while it has no activity toward 2'-O-ribose methylated m7G cap (cap1). Also possesses RNA 5'-pyrophosphohydrolase activity by hydrolyzing the 5'-end triphosphate to release pyrophosphates. Stimulates exoribonuclease activity of Rat1, allowing it to degrade RNAs with stable secondary structure more effectively. This Candida albicans (strain SC5314 / ATCC MYA-2876) (Yeast) protein is Decapping nuclease RAI1.